The following is a 262-amino-acid chain: ClpXP adapter protein SpxH (262 aa).

It belongs to the SpxH family. In terms of assembly, interacts with Spx.

The protein resides in the cytoplasm. Adapter protein required for efficient degradation of Spx by ClpXP under non-stress conditions. Interaction with Spx stabilizes Spx and exposes the C-terminus of Spx for recognition and proteolysis by ClpXP. The chain is ClpXP adapter protein SpxH from Staphylococcus saprophyticus subsp. saprophyticus (strain ATCC 15305 / DSM 20229 / NCIMB 8711 / NCTC 7292 / S-41).